The sequence spans 447 residues: UDP-N-acetylmuramate--L-alanine ligase (447 aa).

108–114 contributes to the ATP binding site; it reads GSHGKTS.

The protein belongs to the MurCDEF family.

Its subcellular location is the cytoplasm. It carries out the reaction UDP-N-acetyl-alpha-D-muramate + L-alanine + ATP = UDP-N-acetyl-alpha-D-muramoyl-L-alanine + ADP + phosphate + H(+). The protein operates within cell wall biogenesis; peptidoglycan biosynthesis. Its function is as follows. Cell wall formation. This is UDP-N-acetylmuramate--L-alanine ligase from Listeria welshimeri serovar 6b (strain ATCC 35897 / DSM 20650 / CCUG 15529 / CIP 8149 / NCTC 11857 / SLCC 5334 / V8).